Consider the following 665-residue polypeptide: Sodium/glucose cotransporter 1 (665 aa).

At 1 to 24 the chain is on the extracellular side; it reads MDSSTLSPAVTATDAPIPSYERIR. Residues 25–47 traverse the membrane as a helical segment; the sequence is NAADISVIVIYFVVVMAVGLWAM. At 48–66 the chain is on the cytoplasmic side; that stretch reads FSTNRGTVGGFFLAGRSMV. A helical membrane pass occupies residues 67-90; sequence WWPIGASLFASNIGSGHFVGLAGT. The Extracellular portion of the chain corresponds to 91–95; it reads GAAAG. A helical transmembrane segment spans residues 96 to 117; it reads IAMGGFEWNALVLVVVLGWIFV. Topologically, residues 118 to 139 are cytoplasmic; sequence PIYIKAGVVTMPEYLRKRFGGK. The chain crosses the membrane as a helical span at residues 140 to 169; the sequence is RIQIYLSVLSLLLYIFTKISADIFSGAIFI. The Extracellular segment spans residues 170–176; it reads NLALGLD. Residues 177 to 193 traverse the membrane as a helical segment; the sequence is IYLAIFILLAITALYTI. Residues 194 to 202 lie on the Cytoplasmic side of the membrane; sequence TGGLAAVIY. The helical transmembrane segment at 203–221 threads the bilayer; sequence TDTLQTAIMLVGSFILTGF. At 222 to 275 the chain is on the extracellular side; that stretch reads AFNEVGGYEAFMDKYMKAIPTKVSNGNFTAKEECYTPRADSFHIFRDPITGDMP. N-linked (GlcNAc...) asparagine glycosylation occurs at asparagine 248. 5 disulfide bridges follow: cysteine 255–cysteine 511, cysteine 255–cysteine 611, cysteine 345–cysteine 351, cysteine 355–cysteine 361, and cysteine 517–cysteine 522. A helical transmembrane segment spans residues 276–295; sequence WPGLIFGLAILALWYWCTDQ. Residues 296 to 309 are Cytoplasmic-facing; the sequence is VIVQRCLSAKNMSH. The helical transmembrane segment at 310–331 threads the bilayer; the sequence is VKADCTLCGYLKLLPMFLMVMP. The Extracellular segment spans residues 332-375; sequence GMISRILYTEKIACVLPEECQKYCGTPVGCTNIAYPTLVVELMP. The helical transmembrane segment at 376-406 threads the bilayer; the sequence is NGLRGLMLSVMMASLMSSLTSIFNSASTLFT. The Cytoplasmic segment spans residues 407-422; the sequence is MDIYTKIRKKASEKEL. A helical membrane pass occupies residues 423 to 444; the sequence is MIAGRLFILVLIGISIAWVPIV. Topologically, residues 445–451 are extracellular; the sequence is QSAQSGQ. Residues 452–477 traverse the membrane as a helical segment; that stretch reads LFDYIQSITSYLGPPIAAVFLLAIFC. Position 457 (glutamine 457) interacts with D-glucose. Residues 478-481 lie on the Cytoplasmic side of the membrane; the sequence is KRVN. Residues 482–504 form a helical membrane-spanning segment; the sequence is EQGAFWGLILGFLIGISRMITEF. The Extracellular portion of the chain corresponds to 505-525; sequence AYGTGSCMEPSNCPKIICGVH. A helical membrane pass occupies residues 526–547; it reads YLYFAIILFVISVITILIISFL. Over 548–645 the chain is Cytoplasmic; the sequence is TKPIPDVHLY…TSEKPLWRTV (98 aa). At serine 585 the chain carries Phosphoserine. Phosphothreonine is present on threonine 588. The chain crosses the membrane as a helical span at residues 646 to 663; it reads VNINGIILLAVAVFCHAY. The Extracellular segment spans residues 664–665; sequence FA.

It belongs to the sodium:solute symporter (SSF) (TC 2.A.21) family. Post-translationally, N-glycosylation is not necessary for the cotransporter function. Expressed in enterocytes and enteroendocrine cells of small intestine (at protein level). Expressed in S3 segments of renal proximal tubules (at protein level). Expressed in endometrial glandular and epithelial cells (at protein level).

The protein localises to the apical cell membrane. The enzyme catalyses D-glucose(out) + 2 Na(+)(out) = D-glucose(in) + 2 Na(+)(in). The catalysed reaction is D-galactose(out) + 2 Na(+)(out) = D-galactose(in) + 2 Na(+)(in). Its activity is regulated as follows. Enhanced by the interaction with PDZK1IP1/MAP17; but unlike SLC5A2/SGLT2, PDZK1IP1 is not essential for SLC5A1 transporter activity. Possibly modulated by cholesterol binding. Electrogenic Na(+)-coupled sugar symporter that actively transports D-glucose or D-galactose at the plasma membrane, with a Na(+) to sugar coupling ratio of 2:1. Transporter activity is driven by a transmembrane Na(+) electrochemical gradient set by the Na(+)/K(+) pump. Has a primary role in the transport of dietary monosaccharides from enterocytes to blood. Responsible for the absorption of D-glucose or D-galactose across the apical brush-border membrane of enterocytes, whereas basolateral exit is provided by GLUT2. Additionally, functions as a D-glucose sensor in enteroendocrine cells, triggering the secretion of the incretins GCG and GIP that control food intake and energy homeostasis. Together with SGLT2, functions in reabsorption of D-glucose from glomerular filtrate, playing a nonredundant role in the S3 segment of the proximal tubules. Transports D-glucose into endometrial epithelial cells, controlling glycogen synthesis and nutritional support for the embryo as well as the decidual transformation of endometrium prior to conception. Acts as a water channel enabling passive water transport in response to the osmotic gradient created upon sugar and Na(+) uptake. Has high water conductivity comparable to aquaporins and therefore is expected to play an important role in transepithelial water permeability, especially in the small intestine. The sequence is that of Sodium/glucose cotransporter 1 (Slc5a1) from Mus musculus (Mouse).